A 322-amino-acid chain; its full sequence is uncharacterized protein (322 aa).

The segment at 1 to 63 (MFKIRKRSVP…DEASSSDSHY (63 aa)) is disordered. Positions 34–49 (FVDDHGKPIAEYRDFP) are enriched in basic and acidic residues. The segment at 245–274 (WKVDRICTYYINRPDKCTRGDNCRFKHDDV) adopts a C3H1-type zinc-finger fold. Positions 278–322 (HRQKEIQSSRNQSWHHRTSSHKYSSENSDHRGYRRHRSRSPHARQ) are disordered. Residues 309 to 322 (GYRRHRSRSPHARQ) are compositionally biased toward basic residues.

This is an uncharacterized protein from Caenorhabditis elegans.